A 426-amino-acid polypeptide reads, in one-letter code: 3-phosphoshikimate 1-carboxyvinyltransferase (426 aa).

3-phosphoshikimate is bound by residues Lys21, Ser22, and Arg26. Lys21 is a phosphoenolpyruvate binding site. Phosphoenolpyruvate is bound by residues Gly92 and Arg122. Residues Ser167, Ser168, Gln169, Ser195, Asp315, and Lys342 each contribute to the 3-phosphoshikimate site. Phosphoenolpyruvate is bound at residue Gln169. Asp315 serves as the catalytic Proton acceptor. Arg346 and Arg386 together coordinate phosphoenolpyruvate.

Belongs to the EPSP synthase family. As to quaternary structure, monomer.

It is found in the cytoplasm. The catalysed reaction is 3-phosphoshikimate + phosphoenolpyruvate = 5-O-(1-carboxyvinyl)-3-phosphoshikimate + phosphate. The protein operates within metabolic intermediate biosynthesis; chorismate biosynthesis. Catalyzes the transfer of the enolpyruvyl moiety of phosphoenolpyruvate (PEP) to the 5-hydroxyl of shikimate-3-phosphate (S3P) to produce enolpyruvyl shikimate-3-phosphate and inorganic phosphate. This Methanosphaera stadtmanae (strain ATCC 43021 / DSM 3091 / JCM 11832 / MCB-3) protein is 3-phosphoshikimate 1-carboxyvinyltransferase.